A 71-amino-acid chain; its full sequence is ATP synthase subunit c (71 aa).

Transmembrane regions (helical) follow at residues 4–24 (IAAA…NGQV) and 47–67 (FIGV…ALIL).

The protein belongs to the ATPase C chain family. F-type ATPases have 2 components, F(1) - the catalytic core - and F(0) - the membrane proton channel. F(1) has five subunits: alpha(3), beta(3), gamma(1), delta(1), epsilon(1). F(0) has three main subunits: a(1), b(2) and c(10-14). The alpha and beta chains form an alternating ring which encloses part of the gamma chain. F(1) is attached to F(0) by a central stalk formed by the gamma and epsilon chains, while a peripheral stalk is formed by the delta and b chains.

The protein resides in the cell membrane. Its function is as follows. F(1)F(0) ATP synthase produces ATP from ADP in the presence of a proton or sodium gradient. F-type ATPases consist of two structural domains, F(1) containing the extramembraneous catalytic core and F(0) containing the membrane proton channel, linked together by a central stalk and a peripheral stalk. During catalysis, ATP synthesis in the catalytic domain of F(1) is coupled via a rotary mechanism of the central stalk subunits to proton translocation. Functionally, key component of the F(0) channel; it plays a direct role in translocation across the membrane. A homomeric c-ring of between 10-14 subunits forms the central stalk rotor element with the F(1) delta and epsilon subunits. This chain is ATP synthase subunit c, found in Enterococcus hirae (strain ATCC 9790 / DSM 20160 / JCM 8729 / LMG 6399 / NBRC 3181 / NCIMB 6459 / NCDO 1258 / NCTC 12367 / WDCM 00089 / R).